Here is a 92-residue protein sequence, read N- to C-terminus: Signal peptidase complex subunit 1 (92 aa).

Residues 1–12 lie on the Cytoplasmic side of the membrane; sequence MDWQGQKLVEQL. Residues 13–30 traverse the membrane as a helical segment; that stretch reads MQILLVISGVVAVVVGYT. At 31-36 the chain is on the lumenal side; that stretch reads TESFRT. A helical membrane pass occupies residues 37-59; it reads MMLIYAGGVVLTTLVTVPNWPFY. Residues 60–92 lie on the Cytoplasmic side of the membrane; the sequence is NLHPLKWLDPSEAEKHPKPEVVSVASKKKFSKK. The tract at residues 73-92 is disordered; it reads EKHPKPEVVSVASKKKFSKK.

This sequence belongs to the SPCS1 family. In terms of assembly, component of the signal peptidase complex (SPC) composed of a catalytic subunit SEC11 and three accessory subunits SPCS1, SPCS2 and SPCS3. The complex induces a local thinning of the ER membrane which is used to measure the length of the signal peptide (SP) h-region of protein substrates. This ensures the selectivity of the complex towards h-regions shorter than 18-20 amino acids.

Its subcellular location is the endoplasmic reticulum membrane. Component of the signal peptidase complex (SPC) which catalyzes the cleavage of N-terminal signal sequences from nascent proteins as they are translocated into the lumen of the endoplasmic reticulum. Dispensable for SPC enzymatic activity. This chain is Signal peptidase complex subunit 1, found in Arabidopsis thaliana (Mouse-ear cress).